We begin with the raw amino-acid sequence, 138 residues long: Phosphoribosyl-AMP cyclohydrolase (138 aa).

D84 contacts Mg(2+). C85 provides a ligand contact to Zn(2+). The Mg(2+) site is built by D86 and D88. Zn(2+) contacts are provided by C102 and C109.

The protein belongs to the PRA-CH family. Homodimer. The cofactor is Mg(2+). It depends on Zn(2+) as a cofactor.

The protein resides in the cytoplasm. It catalyses the reaction 1-(5-phospho-beta-D-ribosyl)-5'-AMP + H2O = 1-(5-phospho-beta-D-ribosyl)-5-[(5-phospho-beta-D-ribosylamino)methylideneamino]imidazole-4-carboxamide. Its pathway is amino-acid biosynthesis; L-histidine biosynthesis; L-histidine from 5-phospho-alpha-D-ribose 1-diphosphate: step 3/9. Catalyzes the hydrolysis of the adenine ring of phosphoribosyl-AMP. This chain is Phosphoribosyl-AMP cyclohydrolase, found in Burkholderia vietnamiensis (strain G4 / LMG 22486) (Burkholderia cepacia (strain R1808)).